Reading from the N-terminus, the 647-residue chain is Putative lipase YDL109C (647 aa).

Catalysis depends on S274, which acts as the Charge relay system. The interval 502-523 (PPPSPTLYEGTAAKEGETRKTR) is disordered. Residues 513–523 (AAKEGETRKTR) show a composition bias toward basic and acidic residues.

The protein belongs to the putative lipase ROG1 family.

In terms of biological role, involved in lipid metabolism. The sequence is that of Putative lipase YDL109C from Saccharomyces cerevisiae (strain ATCC 204508 / S288c) (Baker's yeast).